The following is a 297-amino-acid chain: 1D-myo-inositol 2-acetamido-2-deoxy-alpha-D-glucopyranoside deacetylase (297 aa).

Zn(2+) contacts are provided by His-14, Asp-17, and His-149.

The protein belongs to the MshB deacetylase family. It depends on Zn(2+) as a cofactor.

It catalyses the reaction 1D-myo-inositol 2-acetamido-2-deoxy-alpha-D-glucopyranoside + H2O = 1D-myo-inositol 2-amino-2-deoxy-alpha-D-glucopyranoside + acetate. Catalyzes the deacetylation of 1D-myo-inositol 2-acetamido-2-deoxy-alpha-D-glucopyranoside (GlcNAc-Ins) in the mycothiol biosynthesis pathway. This Thermomonospora curvata (strain ATCC 19995 / DSM 43183 / JCM 3096 / KCTC 9072 / NBRC 15933 / NCIMB 10081 / Henssen B9) protein is 1D-myo-inositol 2-acetamido-2-deoxy-alpha-D-glucopyranoside deacetylase.